Consider the following 299-residue polypeptide: Mimecan (299 aa).

Positions 1 to 19 (MKTLQSTLLLFLFVPLIKP) are cleaved as a signal peptide. N89 carries N-linked (GlcNAc...) (keratan sulfate) asparagine glycosylation. LRR repeat units lie at residues 113–132 (DAVP…FNKI), 133–156 (KKLT…GNLI), 157–180 (EDIE…ENQL), 181–200 (LKLP…YNKI), 201–226 (KSRG…HNAL), 227–247 (ESVP…FNNI), and 248–278 (TSIT…GNPV). A glycan (N-linked (GlcNAc...) (keratan sulfate) asparagine) is linked at N215. A glycan (N-linked (GlcNAc...) asparagine) is linked at N246. An intrachain disulfide couples C256 to C289. A glycan (N-linked (GlcNAc...) (keratan sulfate) asparagine) is linked at N259.

Belongs to the small leucine-rich proteoglycan (SLRP) family. SLRP class III subfamily. Contains keratan sulfate. Keratan sulfate attachment is observed in the cornea but the protein also exists in other tissues without keratan sulfate. Post-translationally, the 12 kDa OIF in bone and the 25 kDa KSPG25 protein in cornea are probably proteolytic fragments. As to expression, bone and cornea.

Its subcellular location is the secreted. The protein resides in the extracellular space. It localises to the extracellular matrix. Its function is as follows. Induces bone formation in conjunction with TGF-beta-1 or TGF-beta-2. This Bos taurus (Bovine) protein is Mimecan (OGN).